Consider the following 573-residue polypeptide: Chromosomal replication initiator protein DnaA (573 aa).

The interval 1 to 85 is domain I, interacts with DnaA modulators; it reads MSQNSSSLLE…TKVLSMRMGR (85 aa). Residues 85 to 231 form a domain II region; sequence RSFSLAVSVE…TPAHNPNREV (147 aa). Residues 91–232 form a disordered region; the sequence is VSVEPSRDGE…PAHNPNREVS (142 aa). A compositionally biased stretch (low complexity) spans 116–169; that stretch reads PYPGQGPQSPQGQQGQQGQHPVQQEVRAHAPAPHQQGQHQAAQHQPPANQAPGQ. Polar residues predominate over residues 178–191; sequence QASQSAGAWEQTHS. Pro residues predominate over residues 202–213; that stretch reads SPAPVEPPPQPA. Residues 232 to 448 are domain III, AAA+ region; that stretch reads SLNPKYTFEN…GALIRVSAYS (217 aa). ATP contacts are provided by glycine 276, glycine 278, lysine 279, and threonine 280. The interval 449–573 is domain IV, binds dsDNA; the sequence is SLINQPIDKE…TQLIKSRGRN (125 aa).

This sequence belongs to the DnaA family. In terms of assembly, oligomerizes as a right-handed, spiral filament on DNA at oriC.

It localises to the cytoplasm. Functionally, plays an essential role in the initiation and regulation of chromosomal replication. ATP-DnaA binds to the origin of replication (oriC) to initiate formation of the DNA replication initiation complex once per cell cycle. Binds the DnaA box (a 9 base pair repeat at the origin) and separates the double-stranded (ds)DNA. Forms a right-handed helical filament on oriC DNA; dsDNA binds to the exterior of the filament while single-stranded (ss)DNA is stabiized in the filament's interior. The ATP-DnaA-oriC complex binds and stabilizes one strand of the AT-rich DNA unwinding element (DUE), permitting loading of DNA polymerase. After initiation quickly degrades to an ADP-DnaA complex that is not apt for DNA replication. Binds acidic phospholipids. The polypeptide is Chromosomal replication initiator protein DnaA (Corynebacterium efficiens (strain DSM 44549 / YS-314 / AJ 12310 / JCM 11189 / NBRC 100395)).